A 693-amino-acid chain; its full sequence is Triadin (693 aa).

Topologically, residues 1–47 are cytoplasmic; the sequence is MTEITAEGNASTTTTVIDNKNGCIPKSPGKVLKRSVTEDIVTTFSSP. Residues 48 to 68 traverse the membrane as a helical segment; the sequence is AAWLLVIALIITWSAVAIVMF. The Lumenal portion of the chain corresponds to 69 to 693; that stretch reads DLVDYKNFSA…NSPGQKQQEQ (625 aa). Residues 117 to 130 are compositionally biased toward acidic residues; the sequence is EGDEDDEDADEDID. Disordered stretches follow at residues 117–260, 278–649, and 666–693; these read EGDE…AVHE, GDLK…QTRP, and FQFP…QQEQ. Basic and acidic residues-rich tracts occupy residues 131-241 and 249-260; these read KGEI…KETP and KKDDKEMPAVHE. Residue serine 301 is modified to Phosphoserine. The span at 305-352 shows a compositional bias: basic and acidic residues; sequence LEEKEKEEKKKMEKKDTSDTKKKEKEVKKKSEETTIDGKGKEPGKPPE. Positions 354–364 are enriched in polar residues; that stretch reads KQMTAKLTTQA. Composition is skewed to basic and acidic residues over residues 366 to 427 and 438 to 502; these read ARKD…KEEI and GKKE…KEAK. A glycan (N-linked (GlcNAc...) asparagine) is linked at asparagine 515. Basic and acidic residues-rich tracts occupy residues 526–547 and 558–579; these read VKPE…DKPK and DSGK…REEN. A glycan (N-linked (GlcNAc...) asparagine) is linked at asparagine 584. The segment covering 587 to 637 has biased composition (basic and acidic residues); that stretch reads KAEKPGKIPKDSKEAPASKKDKEDSKEAPTSKKDKEDSKDVPHSKKDKEVT. Residues 672 to 693 are compositionally biased toward polar residues; the sequence is PVQQPGENPGKTNSPGQKQQEQ.

In terms of assembly, homooligomer of variable subunit number; disulfide-linked. Interacts with CASQ1 and RYR1 in skeletal muscle. Interacts with CASQ2. Post-translationally, phosphorylated by CaMK2. In terms of processing, N-glycosylated. As to expression, detected in heart (at protein level). Detected in heart.

The protein resides in the sarcoplasmic reticulum membrane. In terms of biological role, contributes to the regulation of lumenal Ca2+ release via the sarcoplasmic reticulum calcium release channels RYR1 and RYR2, a key step in triggering skeletal and heart muscle contraction. Required for normal organization of the triad junction, where T-tubules and the sarcoplasmic reticulum terminal cisternae are in close contact. Required for normal skeletal muscle strength. Plays a role in excitation-contraction coupling in the heart and in regulating the rate of heart beats. The polypeptide is Triadin (Mus musculus (Mouse)).